The sequence spans 569 residues: Dihydroorotate dehydrogenase (quinone), mitochondrial (569 aa).

A mitochondrion-targeting transit peptide spans 1–23 (MISKLKPQFMFLPKKHILSYCRK). A helical membrane pass occupies residues 143 to 163 (IIFLLFVSLFGLYGFFESYNP). Residues 225-229 (AGFDK) and Thr-249 contribute to the FMN site. Lys-229 is a substrate binding site. Substrate contacts are provided by residues 274–278 (NSCGF) and Asn-342. An FMN-binding site is contributed by Asn-342. The active-site Nucleophile is Ser-345. Asn-347 is a binding site for substrate. An FMN-binding site is contributed by Lys-429. 458-459 (NT) provides a ligand contact to substrate. FMN-binding positions include 477-478 (SG), 505-507 (SGG), and 528-529 (YS).

This sequence belongs to the dihydroorotate dehydrogenase family. Type 2 subfamily. Monomer. The cofactor is FMN.

It is found in the mitochondrion inner membrane. It carries out the reaction (S)-dihydroorotate + a quinone = orotate + a quinol. The protein operates within pyrimidine metabolism; UMP biosynthesis via de novo pathway; orotate from (S)-dihydroorotate (quinone route): step 1/1. Its function is as follows. Catalyzes the conversion of dihydroorotate to orotate with quinone as electron acceptor. In Plasmodium falciparum (isolate 3D7), this protein is Dihydroorotate dehydrogenase (quinone), mitochondrial.